Reading from the N-terminus, the 393-residue chain is Proteasome-activating nucleotidase (393 aa).

Positions 15 to 53 form a coiled coil; that stretch reads DEVQLVRLLEEKIKSLQIEIENLRKELNYYKAEMEKMLS. ATP contacts are provided by residues 178–183 and Y317; that span reads GTGKTM. The stretch at 365 to 393 forms a coiled coil; sequence MNDLVEAINKINVKRNKMESMKERREKYS. Residues 391 to 393 form a docks into pockets in the proteasome alpha-ring to cause gate opening region; it reads KYS.

Belongs to the AAA ATPase family. In terms of assembly, homohexamer. The hexameric complex has a two-ring architecture resembling a top hat that caps the 20S proteasome core at one or both ends. Upon ATP-binding, the C-terminus of PAN interacts with the alpha-rings of the proteasome core by binding to the intersubunit pockets.

The protein localises to the cytoplasm. ATPase which is responsible for recognizing, binding, unfolding and translocation of substrate proteins into the archaeal 20S proteasome core particle. Is essential for opening the gate of the 20S proteasome via an interaction with its C-terminus, thereby allowing substrate entry and access to the site of proteolysis. Thus, the C-termini of the proteasomal ATPase function like a 'key in a lock' to induce gate opening and therefore regulate proteolysis. Unfolding activity requires energy from ATP hydrolysis, whereas ATP binding alone promotes ATPase-20S proteasome association which triggers gate opening, and supports translocation of unfolded substrates. This is Proteasome-activating nucleotidase from Saccharolobus solfataricus (strain ATCC 35092 / DSM 1617 / JCM 11322 / P2) (Sulfolobus solfataricus).